The chain runs to 1190 residues: DNA-directed RNA polymerase subunit beta (1190 aa).

This sequence belongs to the RNA polymerase beta chain family. As to quaternary structure, the RNAP catalytic core consists of 2 alpha, 1 beta, 1 beta' and 1 omega subunit. When a sigma factor is associated with the core the holoenzyme is formed, which can initiate transcription.

The catalysed reaction is RNA(n) + a ribonucleoside 5'-triphosphate = RNA(n+1) + diphosphate. Its function is as follows. DNA-dependent RNA polymerase catalyzes the transcription of DNA into RNA using the four ribonucleoside triphosphates as substrates. The polypeptide is DNA-directed RNA polymerase subunit beta (Geobacillus thermodenitrificans (strain NG80-2)).